Reading from the N-terminus, the 655-residue chain is p-hydroxybenzoic acid efflux pump subunit AaeB (655 aa).

Helical transmembrane passes span 13–33 (FAVK…HFQL), 38–58 (WAVL…GGEP), 67–89 (GFLR…IAMI), 93–112 (LLMI…ISSL), 121–141 (WGLA…EPLL), 152–172 (EIVI…PRSI), 370–390 (LFWL…IAVV), 407–427 (FIYG…VIIP), 431–451 (QSML…GIEV), 459–479 (MGAL…TFHF), and 482–502 (FLDS…VILL).

This sequence belongs to the aromatic acid exporter ArAE (TC 2.A.85) family.

The protein localises to the cell inner membrane. In terms of biological role, forms an efflux pump with AaeA. Could function as a metabolic relief valve, allowing to eliminate certain compounds when they accumulate to high levels in the cell. In Escherichia coli O9:H4 (strain HS), this protein is p-hydroxybenzoic acid efflux pump subunit AaeB.